Here is a 568-residue protein sequence, read N- to C-terminus: Glucose-6-phosphate isomerase, cytosolic 1 (568 aa).

The active-site Proton donor is the E360. Active-site residues include H391 and K516.

This sequence belongs to the GPI family. In terms of assembly, homodimer.

It is found in the cytoplasm. The catalysed reaction is alpha-D-glucose 6-phosphate = beta-D-fructose 6-phosphate. It functions in the pathway carbohydrate degradation; glycolysis; D-glyceraldehyde 3-phosphate and glycerone phosphate from D-glucose: step 2/4. The protein is Glucose-6-phosphate isomerase, cytosolic 1 (PGIC1) of Clarkia williamsonii.